We begin with the raw amino-acid sequence, 672 residues long: Transketolase (672 aa).

A substrate-binding site is contributed by His-35. Residues His-75 and 124–126 (GPL) contribute to the thiamine diphosphate site. Asp-162 is a binding site for Mg(2+). The thiamine diphosphate site is built by Gly-163 and Asn-192. Residues Asn-192 and Ile-194 each contribute to the Mg(2+) site. Residues His-266, Arg-361, and Ser-388 each contribute to the substrate site. Residue His-266 participates in thiamine diphosphate binding. Glu-415 acts as the Proton donor in catalysis. Phe-441 is a binding site for thiamine diphosphate. Residues His-465, Asp-473, and Arg-524 each coordinate substrate.

This sequence belongs to the transketolase family. In terms of assembly, homodimer. The cofactor is Mg(2+). It depends on Ca(2+) as a cofactor. Requires Mn(2+) as cofactor. Co(2+) serves as cofactor. Thiamine diphosphate is required as a cofactor.

It carries out the reaction D-sedoheptulose 7-phosphate + D-glyceraldehyde 3-phosphate = aldehydo-D-ribose 5-phosphate + D-xylulose 5-phosphate. It participates in carbohydrate biosynthesis; Calvin cycle. The protein operates within carbohydrate degradation; pentose phosphate pathway. In terms of biological role, catalyzes the transfer of a two-carbon ketol group from a ketose donor to an aldose acceptor, via a covalent intermediate with the cofactor thiamine pyrophosphate. This Rhodobacter capsulatus (strain ATCC BAA-309 / NBRC 16581 / SB1003) protein is Transketolase (tktA).